We begin with the raw amino-acid sequence, 588 residues long: Transcription factor 7-like 1 (588 aa).

Residues M1–D31 are compositionally biased toward gly residues. Residues M1–E74 form a CTNNB1-binding region. 3 disordered regions span residues M1–Y101, S203–Y234, and L409–T506. Residues S67 to D81 are compositionally biased toward low complexity. Over residues E83–Y101 the composition is skewed to basic and acidic residues. Residues V346 to S414 constitute a DNA-binding region (HMG box). The Nuclear localization signal motif lies at K421–R427. Composition is skewed to low complexity over residues L431–Q441 and S478–S497.

It belongs to the TCF/LEF family. Binds the armadillo repeat of CTNNB1 and forms a stable complex. Interacts with DAZAP2. Detected in hair follicles and skin keratinocytes, and at lower levels in stomach epithelium.

It is found in the nucleus. Its function is as follows. Participates in the Wnt signaling pathway. Binds to DNA and acts as a repressor in the absence of CTNNB1, and as an activator in its presence. Necessary for the terminal differentiation of epidermal cells, the formation of keratohyalin granules and the development of the barrier function of the epidermis. Down-regulates NQO1, leading to increased mitomycin c resistance. The chain is Transcription factor 7-like 1 (TCF7L1) from Homo sapiens (Human).